A 562-amino-acid polypeptide reads, in one-letter code: Transmembrane E3 ubiquitin-protein ligase FLY1 (562 aa).

The N-terminal stretch at 1–32 (MKKREHLGLGFFEWQIILWLSIWLAISQQALG) is a signal peptide. Residues 33–262 (LRPIREKPRS…TSVNVEVYYN (230 aa)) are Lumenal-facing. A helical transmembrane segment spans residues 263–283 (KAVNYTLMVTFVSFLQVLLLI). The Cytoplasmic portion of the chain corresponds to 284–297 (RQMEHGNTQSGAAK). Residues 298–318 (VSIVMIGQQAIMDAYLCLLHL) traverse the membrane as a helical segment. At 319 to 321 (TAG) the chain is on the lumenal side. Residues 322–342 (ILVESLFNAFATAAFFKFVVF) form a helical membrane-spanning segment. The Cytoplasmic portion of the chain corresponds to 343–373 (SIFEMRYLLAIWKATRPSNSGEGWETMRREL). The helical transmembrane segment at 374–394 (SFLYSRFYGILLGGILIMYQF) threads the bilayer. At 395–397 (HNY) the chain is on the lumenal side. The helical transmembrane segment at 398–418 (MQPILLLMYSFWIPQIVANVV) threads the bilayer. Residues 419–426 (RDSRKPLH) are Cytoplasmic-facing. A helical transmembrane segment spans residues 427-447 (PYYILGMTATRLAIPLYVFGC). At 448–458 (PHNFMRVEPNK) the chain is on the lumenal side. A helical transmembrane segment spans residues 459 to 479 (VWCICLCTFMGLQAVILLLQH). The Cytoplasmic segment spans residues 480 to 562 (YFGSRCFVPR…PTCRRSLPPA (83 aa)). The segment at 512–556 (CVICMTAIDLRQHTSDCMVTPCEHFFHSGCLQRWMDIKMECPTCR) adopts an RING-type; atypical zinc-finger fold.

As to expression, highly expressed in stems. Expressed in root xylem and seed coat.

It is found in the endomembrane system. It carries out the reaction S-ubiquitinyl-[E2 ubiquitin-conjugating enzyme]-L-cysteine + [acceptor protein]-L-lysine = [E2 ubiquitin-conjugating enzyme]-L-cysteine + N(6)-ubiquitinyl-[acceptor protein]-L-lysine.. The protein operates within protein modification; protein ubiquitination. Its function is as follows. E3 ubiquitin-protein ligase that regulates the degree of methylesterification of pectin in seed mucilage. May be involved in the recycling of pectin methylesterase enzymes in the endomembrane system of seed coat epidermal cells. Possesses E3 ubiquitin-protein ligase activity in vitro when associated with the E1 enzyme UBA1 and the E2 enzyme UBC8. May be involved in xylem development. The protein is Transmembrane E3 ubiquitin-protein ligase FLY1 of Arabidopsis thaliana (Mouse-ear cress).